The following is a 238-amino-acid chain: Tetraspanin-4 (238 aa).

Topologically, residues Met-1–Met-13 are cytoplasmic. Residues Phe-14–Leu-34 form a helical membrane-spanning segment. The Extracellular segment spans residues Ala-35–Asn-55. A helical transmembrane segment spans residues Leu-56–Leu-76. At Lys-77–Thr-85 the chain is on the cytoplasmic side. Residues Phe-86–Ala-106 traverse the membrane as a helical segment. The Extracellular portion of the chain corresponds to Tyr-107–Asn-201. N-linked (GlcNAc...) asparagine glycans are attached at residues Asn-152 and Asn-161. A helical membrane pass occupies residues Leu-202 to Phe-222. Over Ala-223–Ala-238 the chain is Cytoplasmic.

The protein belongs to the tetraspanin (TM4SF) family. Forms a complex with integrins.

Its subcellular location is the membrane. The chain is Tetraspanin-4 (Tspan4) from Mus musculus (Mouse).